We begin with the raw amino-acid sequence, 77 residues long: Translation initiation factor IF-1, chloroplastic (77 aa).

Positions 1–71 constitute an S1-like domain; sequence MKEQKLIHEG…TRGRIIYRLR (71 aa).

Belongs to the IF-1 family. As to quaternary structure, component of the 30S ribosomal translation pre-initiation complex which assembles on the 30S ribosome in the order IF-2 and IF-3, IF-1 and N-formylmethionyl-tRNA(fMet); mRNA recruitment can occur at any time during PIC assembly.

It is found in the plastid. The protein resides in the chloroplast. In terms of biological role, one of the essential components for the initiation of protein synthesis. Stabilizes the binding of IF-2 and IF-3 on the 30S subunit to which N-formylmethionyl-tRNA(fMet) subsequently binds. Helps modulate mRNA selection, yielding the 30S pre-initiation complex (PIC). Upon addition of the 50S ribosomal subunit IF-1, IF-2 and IF-3 are released leaving the mature 70S translation initiation complex. This Cabomba caroliniana (Carolina fanwort) protein is Translation initiation factor IF-1, chloroplastic.